The chain runs to 156 residues: Glycine cleavage system H protein 2, mitochondrial (156 aa).

Residues 1-23 (MACRLFWASRVASHLRISVAQRG) constitute a mitochondrion transit peptide. The Lipoyl-binding domain occupies 47-129 (KATFGITDHA…YEQGWIIKVE (83 aa)). An N6-lipoyllysine modification is found at Lys88. Ser131 is modified (phosphoserine).

It belongs to the GcvH family. In terms of assembly, the glycine cleavage system is composed of four proteins: P, T, L and H. (R)-lipoate is required as a cofactor.

It localises to the mitochondrion. Its function is as follows. The glycine decarboxylase (GDC) or glycine cleavage system catalyzes the degradation of glycine. The H protein shuttles the methylamine group of glycine from the P protein to the T protein. In Arabidopsis thaliana (Mouse-ear cress), this protein is Glycine cleavage system H protein 2, mitochondrial (GDH2).